The following is an 867-amino-acid chain: Putative ubiquitin thioesterase L96 (867 aa).

Disordered stretches follow at residues 49-73 (VNQY…GKQD), 177-204 (IKSV…MKKK), 231-271 (YILS…PKYR), and 379-591 (LSTQ…YKGG). Basic residues-rich tracts occupy residues 234 to 258 (SRKK…RSPG) and 421 to 430 (KITRKPKSPR). Composition is skewed to low complexity over residues 433 to 462 (PPAS…SVRA) and 472 to 551 (PPSS…KSPS). Polar residues predominate over residues 565 to 575 (ITVDPSVTPPS). Positions 582 to 591 (RPELPEYKGG) are enriched in basic and acidic residues. An OTU domain is found at 606–745 (YKVIPVKGDG…DYHYTALTPL (140 aa)). D614 is a catalytic residue. C617 functions as the Nucleophile in the catalytic mechanism. The active site involves H738.

The catalysed reaction is Thiol-dependent hydrolysis of ester, thioester, amide, peptide and isopeptide bonds formed by the C-terminal Gly of ubiquitin (a 76-residue protein attached to proteins as an intracellular targeting signal).. Hydrolase that can remove conjugated ubiquitin from proteins and may therefore play an important regulatory role at the level of protein turnover by preventing degradation. May be involved in TIV genomic DNA packaging in a manner related to the Gag polyproteins of the mammalian viruses. The sequence is that of Putative ubiquitin thioesterase L96 from Tipula iridescent virus (TIV).